The chain runs to 345 residues: Phosphate acyltransferase (345 aa).

Belongs to the PlsX family. Homodimer. Probably interacts with PlsY.

The protein resides in the cytoplasm. It carries out the reaction a fatty acyl-[ACP] + phosphate = an acyl phosphate + holo-[ACP]. It functions in the pathway lipid metabolism; phospholipid metabolism. In terms of biological role, catalyzes the reversible formation of acyl-phosphate (acyl-PO(4)) from acyl-[acyl-carrier-protein] (acyl-ACP). This enzyme utilizes acyl-ACP as fatty acyl donor, but not acyl-CoA. The polypeptide is Phosphate acyltransferase (Wolbachia pipientis subsp. Culex pipiens (strain wPip)).